The sequence spans 366 residues: Histidinol-phosphate aminotransferase (366 aa).

K231 is subject to N6-(pyridoxal phosphate)lysine.

Belongs to the class-II pyridoxal-phosphate-dependent aminotransferase family. Histidinol-phosphate aminotransferase subfamily. It depends on pyridoxal 5'-phosphate as a cofactor.

It carries out the reaction L-histidinol phosphate + 2-oxoglutarate = 3-(imidazol-4-yl)-2-oxopropyl phosphate + L-glutamate. It functions in the pathway amino-acid biosynthesis; L-histidine biosynthesis; L-histidine from 5-phospho-alpha-D-ribose 1-diphosphate: step 7/9. In Halobacterium salinarum (strain ATCC 29341 / DSM 671 / R1), this protein is Histidinol-phosphate aminotransferase.